A 654-amino-acid chain; its full sequence is DNA ligase (654 aa).

NAD(+)-binding positions include 34–38 (DLEYD), 83–84 (SL), and glutamate 114. Lysine 116 (N6-AMP-lysine intermediate) is an active-site residue. 4 residues coordinate NAD(+): arginine 137, glutamate 171, lysine 280, and lysine 304. Positions 396, 399, 414, and 419 each coordinate Zn(2+). In terms of domain architecture, BRCT spans 577–654 (VISTILSGYT…EEQFYDLIKQ (78 aa)).

The protein belongs to the NAD-dependent DNA ligase family. LigA subfamily. The cofactor is Mg(2+). Mn(2+) is required as a cofactor.

It carries out the reaction NAD(+) + (deoxyribonucleotide)n-3'-hydroxyl + 5'-phospho-(deoxyribonucleotide)m = (deoxyribonucleotide)n+m + AMP + beta-nicotinamide D-nucleotide.. Its function is as follows. DNA ligase that catalyzes the formation of phosphodiester linkages between 5'-phosphoryl and 3'-hydroxyl groups in double-stranded DNA using NAD as a coenzyme and as the energy source for the reaction. It is essential for DNA replication and repair of damaged DNA. This is DNA ligase from Mycoplasmopsis agalactiae (strain NCTC 10123 / CIP 59.7 / PG2) (Mycoplasma agalactiae).